The following is a 184-amino-acid chain: ATP synthase subunit delta (184 aa).

The protein belongs to the ATPase delta chain family. In terms of assembly, F-type ATPases have 2 components, F(1) - the catalytic core - and F(0) - the membrane proton channel. F(1) has five subunits: alpha(3), beta(3), gamma(1), delta(1), epsilon(1). F(0) has three main subunits: a(1), b(2) and c(10-14). The alpha and beta chains form an alternating ring which encloses part of the gamma chain. F(1) is attached to F(0) by a central stalk formed by the gamma and epsilon chains, while a peripheral stalk is formed by the delta and b chains.

Its subcellular location is the cell inner membrane. In terms of biological role, f(1)F(0) ATP synthase produces ATP from ADP in the presence of a proton or sodium gradient. F-type ATPases consist of two structural domains, F(1) containing the extramembraneous catalytic core and F(0) containing the membrane proton channel, linked together by a central stalk and a peripheral stalk. During catalysis, ATP synthesis in the catalytic domain of F(1) is coupled via a rotary mechanism of the central stalk subunits to proton translocation. Its function is as follows. This protein is part of the stalk that links CF(0) to CF(1). It either transmits conformational changes from CF(0) to CF(1) or is implicated in proton conduction. The chain is ATP synthase subunit delta from Dichelobacter nodosus (strain VCS1703A).